A 351-amino-acid chain; its full sequence is ATP-dependent protease ATP-binding subunit-like protein (351 aa).

The interval 1-26 (MPYITDMLRDRNSAATPPAEERSEPV) is disordered. 79 to 86 (GPTGVGKT) is a binding site for ATP.

It belongs to the ClpA/ClpB family.

This is ATP-dependent protease ATP-binding subunit-like protein from Rhodococcus erythropolis (Arthrobacter picolinophilus).